We begin with the raw amino-acid sequence, 390 residues long: S-adenosylmethionine synthase 3 (390 aa).

E9 serves as a coordination point for Mg(2+). ATP is bound at residue H15. E43 is a K(+) binding site. 2 residues coordinate L-methionine: E56 and Q99. ATP is bound by residues 167 to 169, 235 to 238, D246, 252 to 253, A269, K273, and K277; these read DGK, SGRF, and RK. D246 lines the L-methionine pocket. K277 lines the L-methionine pocket.

It belongs to the AdoMet synthase family. Homotetramer. Interacts with GRF3. Mn(2+) is required as a cofactor. The cofactor is Mg(2+). It depends on Co(2+) as a cofactor. Requires K(+) as cofactor.

The protein resides in the cytoplasm. It carries out the reaction L-methionine + ATP + H2O = S-adenosyl-L-methionine + phosphate + diphosphate. The protein operates within amino-acid biosynthesis; S-adenosyl-L-methionine biosynthesis; S-adenosyl-L-methionine from L-methionine: step 1/1. With respect to regulation, inhibited by 5,5'-dithiobis-2-nitrobenzoic acid (DTNB) and N-ethylmaleimide (NEM) (in vitro). Catalyzes the formation of S-adenosylmethionine from methionine and ATP. The reaction comprises two steps that are both catalyzed by the same enzyme: formation of S-adenosylmethionine (AdoMet) and triphosphate, and subsequent hydrolysis of the triphosphate. Involved in the biosynthesis of lignin. This is S-adenosylmethionine synthase 3 (METK3) from Arabidopsis thaliana (Mouse-ear cress).